The following is a 489-amino-acid chain: GTPase Der (489 aa).

EngA-type G domains are found at residues 30-199 (PVVS…KDKP) and 227-403 (FRLA…SRSH). GTP-binding positions include 36–43 (GRQNVGKS), 85–89 (DTPGL), 151–154 (NKAD), 233–240 (GKPNSGKS), 280–284 (DTAGI), and 345–348 (NKWD). In terms of domain architecture, KH-like spans 404-488 (RKVSTSELNK…PIRLEFRSDR (85 aa)).

It belongs to the TRAFAC class TrmE-Era-EngA-EngB-Septin-like GTPase superfamily. EngA (Der) GTPase family. Associates with the 50S ribosomal subunit.

In terms of biological role, GTPase that plays an essential role in the late steps of ribosome biogenesis. The polypeptide is GTPase Der (Leptospira interrogans serogroup Icterohaemorrhagiae serovar copenhageni (strain Fiocruz L1-130)).